Reading from the N-terminus, the 54-residue chain is Movement protein p6 (54 aa).

Residues 1–10 (MDCVLRSYLL) are Lumenal-facing. A helical membrane pass occupies residues 11 to 31 (LAFGFLICLFLFCLVVFIWFV). Residues 32 to 54 (YKQILFRTTAQSNEARHNHSTVV) lie on the Cytoplasmic side of the membrane.

In terms of assembly, homodimer; disulfide-linked.

It localises to the host rough endoplasmic reticulum membrane. Functionally, transports viral genome to neighboring plant cells directly through plasmosdesmata, without any budding. The movement protein allows efficient cell to cell propagation, by bypassing the host cell wall barrier. Two movement proteins, p6, Hsp70h and three structural proteins, CP, CPm, and P64 are essential for cell-cell movement. Also plays a role in virion formation. Together with CPm and p64, encapsidates the 5'-terminal portion of the viral genome. This chain is Movement protein p6, found in Beet yellows virus (isolate Ukraine) (BYV).